Reading from the N-terminus, the 470-residue chain is MTGEIISIQVGQCGNQVGKQFWGQLAREHGIGVDGQSLHPEDANVVREDDTNVFFRQNDHNRFTPRALLYDLEPSAIGDVQNCFPGFFNERNVWISKEELGAGNTWSIGYDYGLEKQDEFMNMIDKEIDATGNFEGFQLIHSVAGGTGSGLGSNLLEALSDRYHKKIVSTYSVFPSRESEVVVQPYNTILTLRRLIDNSDASVLFDNDALLNLTARVLRDSNTSYQQTNQLIASVMSSVTNSLRFPSYMYNSLPSIFSTLVPTPELHFLAPSFTPFTSDFVPGAKDFKRLSAYDVILDLFDKNNSMVTRDTDTPVYLAIYDALQGAVEQSDVTRAILKTQQRIKFAPWSPTSLHVNLGRKSPYNSSANSDYVSGMMLANTSSIVSVFQKTVSSFDVIFKRGAFLHKFQNGKMFQHGWDEFLESREVIQGVIDEYIAAEQENYLDDVLEEDGNFVGGDAEMIDIESNDDII.

144–150 (AGGTGSG) is a binding site for GTP.

Belongs to the tubulin family.

The protein localises to the cytoplasm. It is found in the cytoskeleton. Its subcellular location is the microtubule organizing center. It localises to the spindle pole body. Functionally, tubulin is the major constituent of microtubules. The gamma chain is found at microtubule organizing centers (MTOC) such as the spindle poles or the centrosome, suggesting that it is involved in the minus-end nucleation of microtubule assembly. The chain is Tubulin gamma chain (TUB4) from Eremothecium gossypii (strain ATCC 10895 / CBS 109.51 / FGSC 9923 / NRRL Y-1056) (Yeast).